The following is a 677-amino-acid chain: Threonine--tRNA ligase (677 aa).

Positions 1–59 constitute a TGS domain; that stretch reads MAQATISITVNGEAKEVEATTTGVELFAEDKNIIAVKINGENRDLYTPLNDGDTVDPIA. Residues 255-561 are catalytic; that stretch reads DHRKLGAEMD…LLEHYAGAFP (307 aa). The Zn(2+) site is built by C360, H411, and H538.

Belongs to the class-II aminoacyl-tRNA synthetase family. In terms of assembly, homodimer. Zn(2+) is required as a cofactor.

It is found in the cytoplasm. It carries out the reaction tRNA(Thr) + L-threonine + ATP = L-threonyl-tRNA(Thr) + AMP + diphosphate + H(+). Functionally, catalyzes the attachment of threonine to tRNA(Thr) in a two-step reaction: L-threonine is first activated by ATP to form Thr-AMP and then transferred to the acceptor end of tRNA(Thr). Also edits incorrectly charged L-seryl-tRNA(Thr). This chain is Threonine--tRNA ligase, found in Bifidobacterium longum (strain DJO10A).